We begin with the raw amino-acid sequence, 116 residues long: Large ribosomal subunit protein uL18 (116 aa).

Belongs to the universal ribosomal protein uL18 family. In terms of assembly, part of the 50S ribosomal subunit; part of the 5S rRNA/L5/L18/L25 subcomplex. Contacts the 5S and 23S rRNAs.

This is one of the proteins that bind and probably mediate the attachment of the 5S RNA into the large ribosomal subunit, where it forms part of the central protuberance. The sequence is that of Large ribosomal subunit protein uL18 from Acinetobacter baylyi (strain ATCC 33305 / BD413 / ADP1).